Consider the following 252-residue polypeptide: Imidazole glycerol phosphate synthase subunit HisF (252 aa).

Catalysis depends on residues D11 and D130.

It belongs to the HisA/HisF family. In terms of assembly, heterodimer of HisH and HisF.

Its subcellular location is the cytoplasm. It catalyses the reaction 5-[(5-phospho-1-deoxy-D-ribulos-1-ylimino)methylamino]-1-(5-phospho-beta-D-ribosyl)imidazole-4-carboxamide + L-glutamine = D-erythro-1-(imidazol-4-yl)glycerol 3-phosphate + 5-amino-1-(5-phospho-beta-D-ribosyl)imidazole-4-carboxamide + L-glutamate + H(+). Its pathway is amino-acid biosynthesis; L-histidine biosynthesis; L-histidine from 5-phospho-alpha-D-ribose 1-diphosphate: step 5/9. Functionally, IGPS catalyzes the conversion of PRFAR and glutamine to IGP, AICAR and glutamate. The HisF subunit catalyzes the cyclization activity that produces IGP and AICAR from PRFAR using the ammonia provided by the HisH subunit. This Lacticaseibacillus paracasei (strain ATCC 334 / BCRC 17002 / CCUG 31169 / CIP 107868 / KCTC 3260 / NRRL B-441) (Lactobacillus paracasei) protein is Imidazole glycerol phosphate synthase subunit HisF.